Here is a 192-residue protein sequence, read N- to C-terminus: Glycerol-3-phosphate acyltransferase (192 aa).

5 helical membrane passes run 4-24 (MFWL…AILL), 54-74 (LAIL…LIAS), 80-100 (IAQQ…PVYF), 112-132 (AGVL…AWLL), and 154-174 (LLAW…LLIV).

The protein belongs to the PlsY family. As to quaternary structure, probably interacts with PlsX.

The protein localises to the cell inner membrane. It catalyses the reaction an acyl phosphate + sn-glycerol 3-phosphate = a 1-acyl-sn-glycero-3-phosphate + phosphate. It participates in lipid metabolism; phospholipid metabolism. Functionally, catalyzes the transfer of an acyl group from acyl-phosphate (acyl-PO(4)) to glycerol-3-phosphate (G3P) to form lysophosphatidic acid (LPA). This enzyme utilizes acyl-phosphate as fatty acyl donor, but not acyl-CoA or acyl-ACP. In Pseudomonas savastanoi pv. phaseolicola (strain 1448A / Race 6) (Pseudomonas syringae pv. phaseolicola (strain 1448A / Race 6)), this protein is Glycerol-3-phosphate acyltransferase.